Here is a 409-residue protein sequence, read N- to C-terminus: Odorant receptor 35a (409 aa).

The Cytoplasmic segment spans residues 1 to 35; that stretch reads MVRYVPRFADGQKVKLAWPLAVFRLNHIFWPLDPS. The helical transmembrane segment at 36–56 threads the bilayer; it reads TGKWGRYLDKVLAVAMSLVFM. Residues 57–64 lie on the Extracellular side of the membrane; the sequence is QHNDAELR. The helical transmembrane segment at 65–85 threads the bilayer; sequence YLRFEASNRNLDAFLTGMPTY. The Cytoplasmic segment spans residues 86-139; sequence LILVEAQFRSLHILLHFEKLQKFLEIFYANIYIDPRKEPEMFRKVDGKMIINRL. A helical transmembrane segment spans residues 140-160; sequence VSAMYGAVISLYLIAPVFSII. N-linked (GlcNAc...) asparagine glycosylation occurs at Asn-161. Residues 161–177 are Extracellular-facing; sequence NQSKDFLYSMIFPFDSD. A helical membrane pass occupies residues 178-198; that stretch reads PLYIFVPLLLTNVWVGIVIDT. The Cytoplasmic segment spans residues 199–273; sequence MMFGETNLLC…QQLEAQYTVR (75 aa). A helical membrane pass occupies residues 274–294; the sequence is VFIMFAFAAGLLCALSFKAYT. The Extracellular segment spans residues 295–302; it reads NPMANYIY. The chain crosses the membrane as a helical span at residues 303–323; that stretch reads AIWFGAKTVELLSLGQIGSDL. Residues 324 to 379 lie on the Cytoplasmic side of the membrane; sequence AFTTDSLSTMYYLTHWEQILQYSTNPSENLRLLKLINLAIEMNSKPFYVTGLKYFR. Residues 380 to 400 form a helical membrane-spanning segment; the sequence is VSLQAGLKILQASFSYFTFLT. Residues 401 to 409 are Extracellular-facing; that stretch reads SMQRRQMSN.

Belongs to the insect chemoreceptor superfamily. Heteromeric odorant receptor channel (TC 1.A.69) family. Or1a subfamily. Interacts with Orco. Complexes exist early in the endomembrane system in olfactory sensory neurons (OSNs), coupling these complexes to the conserved ciliary trafficking pathway. As to expression, expressed in ac3B olfactory sensory neurons in the antenna.

The protein resides in the cell membrane. Odorant receptor which mediates acceptance or avoidance behavior, depending on its substrates. The odorant receptor repertoire encodes a large collection of odor stimuli that vary widely in identity, intensity, and duration. Forms a complex with Orco to form odorant-sensing units, providing sensitive and prolonged odorant signaling and calcium permeability. Involved in the behavioral responses to esters. Involved in the behavioral responses to butanol, pentanol, hexanol, octanol, propyl acetate, and butyl acetate. This Drosophila melanogaster (Fruit fly) protein is Odorant receptor 35a (Or35a).